The sequence spans 290 residues: Prepilin leader peptidase/N-methyltransferase (290 aa).

Residues 14-34 (LYFSLVFLFSLMIGSFLNVVI) traverse the membrane as a helical segment. Positions 74, 77, 99, and 102 each coordinate Zn(2+). 6 consecutive transmembrane segments (helical) span residues 106–126 (ISAR…AVAM), 130–150 (PGWG…LTFI), 161–181 (LTLP…FVSL), 185–205 (VIGA…FKLL), 232–252 (PIVL…LILL), and 261–281 (IPFG…GDSI).

Belongs to the peptidase A24 family. It depends on Zn(2+) as a cofactor.

The protein resides in the cell inner membrane. The catalysed reaction is Typically cleaves a -Gly-|-Phe- bond to release an N-terminal, basic peptide of 5-8 residues from type IV prepilin, and then N-methylates the new N-terminal amino group, the methyl donor being S-adenosyl-L-methionine.. Its function is as follows. Plays an essential role in type IV pili and type II pseudopili formation by proteolytically removing the leader sequence from substrate proteins and subsequently monomethylating the alpha-amino group of the newly exposed N-terminal phenylalanine. In Aeromonas hydrophila, this protein is Prepilin leader peptidase/N-methyltransferase (tapD).